A 124-amino-acid polypeptide reads, in one-letter code: Ribonuclease pancreatic (124 aa).

Residues 1-13 (KESAAAKFERQHM) show a composition bias toward basic and acidic residues. Residues 1–23 (KESAAAKFERQHMDPSASSISSS) form a disordered region. The substrate site is built by Lys7 and Arg10. His12 acts as the Proton acceptor in catalysis. Intrachain disulfides connect Cys26–Cys84, Cys40–Cys95, Cys58–Cys110, and Cys65–Cys72. Asn34 is a glycosylation site (N-linked (GlcNAc...) asparagine). Substrate is bound by residues 41–45 (KPVNT), Lys66, and Arg85. His119 acts as the Proton donor in catalysis.

This sequence belongs to the pancreatic ribonuclease family. Monomer. Interacts with and forms tight 1:1 complexes with RNH1. Dimerization of two such complexes may occur. Interaction with RNH1 inhibits this protein. As to expression, pancreas.

The protein localises to the secreted. The enzyme catalyses an [RNA] containing cytidine + H2O = an [RNA]-3'-cytidine-3'-phosphate + a 5'-hydroxy-ribonucleotide-3'-[RNA].. It catalyses the reaction an [RNA] containing uridine + H2O = an [RNA]-3'-uridine-3'-phosphate + a 5'-hydroxy-ribonucleotide-3'-[RNA].. Functionally, endonuclease that catalyzes the cleavage of RNA on the 3' side of pyrimidine nucleotides. Acts on single-stranded and double-stranded RNA. This is Ribonuclease pancreatic (RNASE1) from Alces alces alces (European moose).